A 507-amino-acid chain; its full sequence is ATP synthase subunit alpha, chloroplastic (507 aa).

Residue 170–177 participates in ATP binding; that stretch reads GDRQTGKT.

Belongs to the ATPase alpha/beta chains family. In terms of assembly, F-type ATPases have 2 components, CF(1) - the catalytic core - and CF(0) - the membrane proton channel. CF(1) has five subunits: alpha(3), beta(3), gamma(1), delta(1), epsilon(1). CF(0) has four main subunits: a, b, b' and c.

It is found in the plastid. The protein localises to the chloroplast thylakoid membrane. It catalyses the reaction ATP + H2O + 4 H(+)(in) = ADP + phosphate + 5 H(+)(out). Its function is as follows. Produces ATP from ADP in the presence of a proton gradient across the membrane. The alpha chain is a regulatory subunit. In Spinacia oleracea (Spinach), this protein is ATP synthase subunit alpha, chloroplastic.